The following is a 145-amino-acid chain: Large ribosomal subunit protein uL11 (145 aa).

It belongs to the universal ribosomal protein uL11 family. As to quaternary structure, part of the ribosomal stalk of the 50S ribosomal subunit. Interacts with L10 and the large rRNA to form the base of the stalk. L10 forms an elongated spine to which L12 dimers bind in a sequential fashion forming a multimeric L10(L12)X complex. In terms of processing, one or more lysine residues are methylated.

Its function is as follows. Forms part of the ribosomal stalk which helps the ribosome interact with GTP-bound translation factors. This chain is Large ribosomal subunit protein uL11, found in Rickettsia canadensis (strain McKiel).